The following is a 298-amino-acid chain: 33 kDa chaperonin (298 aa).

2 cysteine pairs are disulfide-bonded: cysteine 239–cysteine 241 and cysteine 272–cysteine 275.

It belongs to the HSP33 family. Post-translationally, under oxidizing conditions two disulfide bonds are formed involving the reactive cysteines. Under reducing conditions zinc is bound to the reactive cysteines and the protein is inactive.

It is found in the cytoplasm. Its function is as follows. Redox regulated molecular chaperone. Protects both thermally unfolding and oxidatively damaged proteins from irreversible aggregation. Plays an important role in the bacterial defense system toward oxidative stress. This Picosynechococcus sp. (strain ATCC 27264 / PCC 7002 / PR-6) (Agmenellum quadruplicatum) protein is 33 kDa chaperonin.